Consider the following 116-residue polypeptide: Alpha-defensin 29 (116 aa).

Residues 1–19 form the signal peptide; sequence MKTLVLLSALVLPCFQVQA. Positions 20–60 are excised as a propeptide; that stretch reads DPIQNTDEETKTEEQPEEEDQAVSVSFGGTEGSALQDVAQR. The interval 22–44 is disordered; that stretch reads IQNTDEETKTEEQPEEEDQAVSV. Tandem repeats lie at residues 65 to 67, 68 to 70, 71 to 73, 74 to 76, 77 to 79, 80 to 82, 83 to 85, 86 to 88, and 89 to 91. Residues 65 to 70 form a 2 X 3 AA tandem repeats of C-R-X region; it reads CRKCRV. The interval 71 to 79 is 3 X 3 AA tandem repeats of C-Q-X; the sequence is CQKCQVCQK. The 4 X 3 AA tandem repeats of C-P-X stretch occupies residues 80 to 91; sequence CPVCPTCPQCPK.

This sequence belongs to the alpha-defensin family. In terms of tissue distribution, small bowel.

Its subcellular location is the secreted. In terms of biological role, apparent precursor of a secreted, cationic, proline- and cysteine-rich peptide that contains Cys-Pro-Xaa repeats. Unlike cryptdin, the proposed mature peptide region lacks the structural motif characteristic of defensins. This is Alpha-defensin 29 from Mus musculus (Mouse).